A 145-amino-acid polypeptide reads, in one-letter code: 3-hydroxyacyl-[acyl-carrier-protein] dehydratase FabZ (145 aa).

Histidine 48 is a catalytic residue.

The protein belongs to the thioester dehydratase family. FabZ subfamily.

It is found in the cytoplasm. It catalyses the reaction a (3R)-hydroxyacyl-[ACP] = a (2E)-enoyl-[ACP] + H2O. Its function is as follows. Involved in unsaturated fatty acids biosynthesis. Catalyzes the dehydration of short chain beta-hydroxyacyl-ACPs and long chain saturated and unsaturated beta-hydroxyacyl-ACPs. In Stutzerimonas stutzeri (strain A1501) (Pseudomonas stutzeri), this protein is 3-hydroxyacyl-[acyl-carrier-protein] dehydratase FabZ.